A 141-amino-acid chain; its full sequence is Oleosin 14.9 kDa (141 aa).

Positions 1–22 (MADQTRTHHEMISRDSTQEAHP) are enriched in basic and acidic residues. The segment at 1–24 (MADQTRTHHEMISRDSTQEAHPKA) is disordered. The interval 1–29 (MADQTRTHHEMISRDSTQEAHPKARQMVK) is polar. Residues 30–141 (AATAVTAGGS…NIGVQHQQVS (112 aa)) form a hydrophobic region. Transmembrane regions (helical) follow at residues 38–58 (GSLLVLSGLTLAGTVIALTVA), 60–80 (PLLVIFSPVLVPAVVTVALII), and 81–101 (TGFLASGGFGIAAITAFSWLY).

The protein belongs to the oleosin family.

It localises to the lipid droplet. It is found in the membrane. Its function is as follows. May have a structural role to stabilize the lipid body during desiccation of the seed by preventing coalescence of the oil. Probably interacts with both lipid and phospholipid moieties of lipid bodies. May also provide recognition signals for specific lipase anchorage in lipolysis during seedling growth. This Arabidopsis thaliana (Mouse-ear cress) protein is Oleosin 14.9 kDa (OL3).